Consider the following 196-residue polypeptide: MDVTIQHPWFKRALGPFYPSRLFDQFFGEGLFEYDLLPFLSSTISPYYRQSLFRTVLDSGISELMTHMWFVMHQPHAGNPKNNPGKVRSDRDKFVIFLDVKHFSPEDLTVKVLEDFVEIHGKHNERQDDHGYISREFHRRYRLPSNVDQSALSCSLSADGMLTFSGPKVQSGLDAGHSERAIPVSREEKPSSAPSS.

Met-1 bears the N-acetylmethionine mark. Positions 1–63 (MDVTIQHPWF…RTVLDSGISE (63 aa)) are required for complex formation with BFSP1 and BFSP2. Gln-6 is subject to Deamidated glutamine; partial. Ser-45 carries the phosphoserine modification. Gln-50 bears the Deamidated glutamine; partial mark. A sHSP domain is found at 76 to 185 (HAGNPKNNPG…GHSERAIPVS (110 aa)). N6-acetyllysine is present on residues Lys-93 and Lys-122. His-123 contributes to the Zn(2+) binding site. At Asn-124 the chain carries Deamidated asparagine; partial. Glu-125 and His-130 together coordinate Zn(2+). Ser-145 carries the post-translational modification Phosphoserine. A Deamidated asparagine; partial modification is found at Asn-146. The disordered stretch occupies residues 168 to 196 (KVQSGLDAGHSERAIPVSREEKPSSAPSS). The residue at position 170 (Gln-170) is a Deamidated glutamine; partial. A compositionally biased stretch (basic and acidic residues) spans 176–190 (GHSERAIPVSREEKP). His-177 serves as a coordination point for Zn(2+). Ser-185 carries an O-linked (GlcNAc) serine glycan.

This sequence belongs to the small heat shock protein (HSP20) family. As to quaternary structure, heteropolymer composed of three CRYAA and one CRYAB subunits. Inter-subunit bridging via zinc ions enhances stability, which is crucial as there is no protein turn over in the lens. Can also form homodimers and homotetramers (dimers of dimers) which serve as the building blocks of homooligomers. Within homooligomers, the zinc-binding motif is created from residues of 3 different molecules. His-123 and Glu-125 from one molecule are ligands of the zinc ion, and His-130 and His-177 residues from additional molecules complete the site with tetrahedral coordination geometry. Part of a complex required for lens intermediate filament formation composed of BFSP1, BFSP2 and CRYAA. Acetylation at Lys-93 may increase chaperone activity. In terms of processing, undergoes age-dependent proteolytical cleavage at the C-terminus. Cleavage by m-calpain produces specifically alpha-crystallin A(1-162), cleavage by Capn3/Lp82 produces specifically alpha-crystallin A(1-168) which is the major truncated form during normal maturation and induced cataract formation. In terms of tissue distribution, highly expressed in eye lens. Also expressed in non-lenticular tissues such as brain, spleen, liver, lung, skin, small intestine and a several epithelial and fibroblast cell lines with highest levels in spleen.

Its subcellular location is the cytoplasm. It is found in the nucleus. Its function is as follows. Contributes to the transparency and refractive index of the lens. Acts as a chaperone, preventing aggregation of various proteins under a wide range of stress conditions. Required for the correct formation of lens intermediate filaments as part of a complex composed of BFSP1, BFSP2 and CRYAA. Functionally, inhibits bacterial growth in the lens. The chain is Alpha-crystallin A chain (Cryaa) from Rattus norvegicus (Rat).